Reading from the N-terminus, the 256-residue chain is Small ribosomal subunit protein eS1 (256 aa).

N-acetylalanine; partial is present on alanine 2.

It belongs to the eukaryotic ribosomal protein eS1 family. As to quaternary structure, component of the small ribosomal subunit. Mature ribosomes consist of a small (40S) and a large (60S) subunit. The 40S subunit contains about 33 different proteins and 1 molecule of RNA (18S). The 60S subunit contains about 49 different proteins and 3 molecules of RNA (25S, 5.8S and 5S).

Its subcellular location is the cytoplasm. The protein is Small ribosomal subunit protein eS1 of Coprinopsis cinerea (strain Okayama-7 / 130 / ATCC MYA-4618 / FGSC 9003) (Inky cap fungus).